A 1445-amino-acid chain; its full sequence is Tensin-3 (1445 aa).

Residues 1-170 (MEEGHGLDLT…QFLSGLLSGS (170 aa)) enclose the Phosphatase tensin-type domain. Residues 175 to 301 (ASPLFLHFVI…GKVELVFSAT (127 aa)) enclose the C2 tensin-type domain. Threonine 323 bears the Phosphothreonine mark. A phosphoserine mark is found at serine 332 and serine 361. Residues 358–421 (RKKSSSDPGI…GTRRGLSAQE (64 aa)) are disordered. Residues 386-400 (TLSVSSDSGHSTASA) show a composition bias toward polar residues. 2 positions are modified to phosphoserine: serine 440 and serine 516. The interval 538–568 (VPDLGLGMDGPYERERTFGSREPKQPQPLLR) is disordered. Residues 548–561 (PYERERTFGSREPK) are compositionally biased toward basic and acidic residues. Serine 571 carries the phosphoserine modification. Disordered stretches follow at residues 618-695 (DNPG…TLDI) and 717-769 (PTHM…QPLG). Phosphothreonine is present on threonine 632. A phosphoserine mark is found at serine 649, serine 660, serine 687, and serine 690. Positions 723-733 (LGSQANGSVSP) are enriched in polar residues. Phosphoserine occurs at positions 735 and 776. Residue tyrosine 780 is modified to Phosphotyrosine. 3 positions are modified to phosphoserine: serine 811, serine 866, and serine 901. Disordered stretches follow at residues 859-981 (ALRH…TRKD) and 1076-1127 (GHSS…PHSG). The segment covering 864–873 (PFSPPEPPLS) has biased composition (pro residues). Positions 914–935 (ASSTPSFQQAFASSCTISSNGP) are enriched in polar residues. Residues 1099–1109 (PEKKRASEGDR) are compositionally biased toward basic and acidic residues. The segment covering 1110-1127 (SLGSVSPSSSGFSSPHSG) has biased composition (low complexity). Residues serine 1149 and serine 1154 each carry the phosphoserine modification. The SH2 domain maps to 1172 to 1282 (WYKADISREQ…ALPCKLLIPE (111 aa)). Serine 1293 and serine 1441 each carry phosphoserine. The PTB domain maps to 1310–1444 (ACNVWYLNSV…SKVMIGSPKK (135 aa)).

Belongs to the PTEN phosphatase protein family. Interacts with EGFR; EGF promotes the interaction with EGFR. Interacts with PTK2/FAK1 and BCAR1. Tyrosine phosphorylation is critical for these interactions. Interacts with Rho GTPase-activating protein DLC1 and with the regulatory p85 subunit of the PI3K kinase complex; in resting cells, interacts (via C2 tensin-type domain) with DLC1 but, following growth factor stimulation, TNS3 is phosphorylated which leads to weakened interaction with DLC1 and enhanced interaction (via C2 tensin-type domain) with p85 while DLC1 interaction with PTEN increases. Interacts (when phosphorylated on the SH2 domain) with integrins ITGB1, ITGB3 and ITGB5 and with scaffolding protein PEAK1 (phosphorylated on 'Tyr-635'); mediates the association of PEAK1 with ITGB1, ITGB3 and ITGB5. Interacts (via N-terminus) with DOCK5 (via N-terminus); the interaction increases DOCK5 guanine nucleotide exchange activity towards Rac. Interacts with receptor tyrosine kinase MET. Post-translationally, phosphorylated on Ser/Thr and Tyr residues. Phosphorylated on Thr-323 in the C2-type tensin domain following EGF stimulation which changes its binding preference from DLC1 to the p85 regulatory subunit of the PI3K kinase complex. EGF induces tyrosine phosphorylation in a time- and dose-dependent manner. Phosphorylation of the SH2 domain enhances interaction with PEAK1. In terms of tissue distribution, expressed in umbilical vein endothelial cells, epithelial cells, and fibroblasts cells (at protein level). Highly expressed in thyroid, kidney and placenta. Low expression in heart, skeletal muscle, spleen, liver, and lung. Expressed at higher levels in tonsil-derived mesenchymal stem cells (MSCs) than in adipose tissue-derived MSCs or bone marrow-derived MSCs. Expressed in tumor endothelial cells. Expression seems to be down-regulated in thyroid tumor tissues and in anaplastic carcinomas.

The protein resides in the cell junction. It localises to the focal adhesion. Its subcellular location is the cell projection. It is found in the podosome. In terms of biological role, may act as a protein phosphatase and/or a lipid phosphatase. Involved in the dissociation of the integrin-tensin-actin complex. EGF activates TNS4 and down-regulates TNS3 which results in capping the tail of ITGB1. Increases DOCK5 guanine nucleotide exchange activity towards Rac and plays a role in osteoclast podosome organization. Enhances RHOA activation in the presence of DLC1. Required for growth factor-induced epithelial cell migration; growth factor stimulation induces TNS3 phosphorylation which changes its binding preference from DLC1 to the p85 regulatory subunit of the PI3K kinase complex, displacing PI3K inhibitor PTEN and resulting in translocation of the TNS3-p85 complex to the leading edge of migrating cells to promote RAC1 activation. Meanwhile, PTEN switches binding preference from p85 to DLC1 and the PTEN-DLC1 complex translocates to the posterior of migrating cells to activate RHOA. Acts as an adapter protein by bridging the association of scaffolding protein PEAK1 with integrins ITGB1, ITGB3 and ITGB5 which contributes to the promotion of cell migration. Controls tonsil-derived mesenchymal stem cell proliferation and differentiation by regulating the activity of integrin ITGB1. This Homo sapiens (Human) protein is Tensin-3 (TNS3).